Consider the following 366-residue polypeptide: Tyrosyl-DNA phosphodiesterase 2 (366 aa).

Met1 is modified (N-acetylmethionine). The span at 1-22 (MASGSSSDAAESAEPAAAPAAA) shows a compositional bias: low complexity. The disordered stretch occupies residues 1-30 (MASGSSSDAAESAEPAAAPAAAETEEDQVK). Lys30 participates in a covalent cross-link: Glycyl lysine isopeptide (Lys-Gly) (interchain with G-Cter in SUMO2). A Phosphothreonine; by ACVR1B modification is found at Thr95. An interaction with 5' end of substrate DNA region spans residues 126 to 130 (NIDGL). Mg(2+)-binding residues include Asp128 and Glu158. The tract at residues 232–237 (HLESTR) is interaction with 5' end of substrate DNA. Residue Asp268 is the Proton donor/acceptor of the active site. Residues 270-272 (NLR) are interaction with 5' end of substrate DNA.

This sequence belongs to the CCR4/nocturin family. Interacts with TRAF2, TRAF3, TRAF5, TRAF6, TNFRSF8/CD30, TNFRSF5/CD40, TNFRSF1B/TNF-R75, ETS1, ETS2, FLI1, SMAD3 and ACVR1B/ALK4. Mg(2+) serves as cofactor. It depends on Mn(2+) as a cofactor. Post-translationally, ubiquitinated by TRAF6.

It localises to the nucleus. It is found in the PML body. The protein resides in the nucleolus. Its subcellular location is the cytoplasm. Its function is as follows. DNA repair enzyme that can remove a variety of covalent adducts from DNA through hydrolysis of a 5'-phosphodiester bond, giving rise to DNA with a free 5' phosphate. Catalyzes the hydrolysis of dead-end complexes between DNA and the topoisomerase 2 (TOP2) active site tyrosine residue. The 5'-tyrosyl DNA phosphodiesterase activity can enable the repair of TOP2-induced DNA double-strand breaks/DSBs without the need for nuclease activity, creating a 'clean' DSB with 5'-phosphate termini that are ready for ligation. Thereby, protects the transcription of many genes involved in neurological development and maintenance from the abortive activity of TOP2. Hydrolyzes 5'-phosphoglycolates on protruding 5' ends on DSBs due to DNA damage by radiation and free radicals. Has preference for single-stranded DNA or duplex DNA with a 4 base pair overhang as substrate. Also has 3'-tyrosyl DNA phosphodiesterase activity, but less efficiently and much slower than TDP1. Constitutes the major if not only 5'-tyrosyl-DNA phosphodiesterase in cells. Also acts as an adapter by participating in the specific activation of MAP3K7/TAK1 in response to TGF-beta: associates with components of the TGF-beta receptor-TRAF6-TAK1 signaling module and promotes their ubiquitination dependent complex formation. Involved in non-canonical TGF-beta induced signaling routes. May also act as a negative regulator of ETS1 and may inhibit NF-kappa-B activation. Acts as a regulator of ribosome biogenesis following stress. The polypeptide is Tyrosyl-DNA phosphodiesterase 2 (Tdp2) (Rattus norvegicus (Rat)).